The sequence spans 334 residues: L-lactate dehydrogenase B-A chain (334 aa).

Residues 30 to 58 (GQVGMACAVSVLLRELADELALVDVVEDR) and R100 contribute to the NAD(+) site. Substrate-binding residues include R107, N139, and R170. N139 contacts NAD(+). H194 acts as the Proton acceptor in catalysis. Substrate is bound at residue T249.

The protein belongs to the LDH/MDH superfamily. LDH family. In terms of assembly, homotetramer.

It localises to the cytoplasm. The catalysed reaction is (S)-lactate + NAD(+) = pyruvate + NADH + H(+). It functions in the pathway fermentation; pyruvate fermentation to lactate; (S)-lactate from pyruvate: step 1/1. This chain is L-lactate dehydrogenase B-A chain (ldhba), found in Danio rerio (Zebrafish).